Consider the following 78-residue polypeptide: Metallothionein-like protein type 2 (78 aa).

This sequence belongs to the metallothionein superfamily. Type 15 family.

In terms of biological role, metallothioneins have a high content of cysteine residues that bind various heavy metals. This Actinidia deliciosa (Kiwi) protein is Metallothionein-like protein type 2.